The following is a 306-amino-acid chain: Acetyl-coenzyme A carboxylase carboxyl transferase subunit beta (306 aa).

A CoA carboxyltransferase N-terminal domain is found at 25–294 (VWTKCDSCGQ…PQDPLPHEPR (270 aa)). Residues Cys29, Cys32, Cys48, and Cys51 each contribute to the Zn(2+) site. A C4-type zinc finger spans residues 29–51 (CDSCGQVLYRAELERNLEVCPKC). The segment at 281–306 (NRPQPQDPLPHEPRPDAVPEDHQDEV) is disordered. A compositionally biased stretch (basic and acidic residues) spans 289–306 (LPHEPRPDAVPEDHQDEV).

Belongs to the AccD/PCCB family. In terms of assembly, acetyl-CoA carboxylase is a heterohexamer composed of biotin carboxyl carrier protein (AccB), biotin carboxylase (AccC) and two subunits each of ACCase subunit alpha (AccA) and ACCase subunit beta (AccD). The cofactor is Zn(2+).

The protein resides in the cytoplasm. It carries out the reaction N(6)-carboxybiotinyl-L-lysyl-[protein] + acetyl-CoA = N(6)-biotinyl-L-lysyl-[protein] + malonyl-CoA. It functions in the pathway lipid metabolism; malonyl-CoA biosynthesis; malonyl-CoA from acetyl-CoA: step 1/1. Functionally, component of the acetyl coenzyme A carboxylase (ACC) complex. Biotin carboxylase (BC) catalyzes the carboxylation of biotin on its carrier protein (BCCP) and then the CO(2) group is transferred by the transcarboxylase to acetyl-CoA to form malonyl-CoA. The polypeptide is Acetyl-coenzyme A carboxylase carboxyl transferase subunit beta (Sodalis glossinidius (strain morsitans)).